The sequence spans 64 residues: Large ribosomal subunit protein bL35 (64 aa).

Positions 18–39 (GSGLVKHYPSNKHHKNTHKKEN) are disordered. A compositionally biased stretch (basic residues) spans 26–39 (PSNKHHKNTHKKEN).

Belongs to the bacterial ribosomal protein bL35 family.

The polypeptide is Large ribosomal subunit protein bL35 (Symbiobacterium thermophilum (strain DSM 24528 / JCM 14929 / IAM 14863 / T)).